The chain runs to 352 residues: Putative DNA relaxase NicK (352 aa).

It belongs to the plasmid replication initiation factor family.

Functionally, probable DNA relaxase involved in the transfer of the integrative and conjugative element ICEBs1. Required for the transfer of ICEBs1. Probably mediates conjugation of ICEBs1 by nicking at oriT on the conjugative element and facilitates the translocation of a single strand of ICEBs1 DNA through a transmembrane conjugation pore into the recipient cell. In Bacillus subtilis (strain 168), this protein is Putative DNA relaxase NicK (nicK).